Here is a 308-residue protein sequence, read N- to C-terminus: Protein FdhE homolog (308 aa).

Belongs to the FdhE family.

It is found in the cytoplasm. Functionally, necessary for formate dehydrogenase activity. This is Protein FdhE homolog from Edwardsiella ictaluri (strain 93-146).